The following is a 563-amino-acid chain: Efflux pump FUS6 (563 aa).

The interval 1–30 (MPQPDKMAAVNNAMPQPAPEKSLSSDPQPE) is disordered. The next 5 membrane-spanning stretches (helical) occupy residues 39–59 (WLIF…TSII), 75–95 (LYVW…PIFA), 105–125 (SLTL…GGAH), 138–158 (GIGG…MVSI), and 167–187 (IIGG…GAFA). Asparagine 189 carries N-linked (GlcNAc...) asparagine glycosylation. 3 helical membrane-spanning segments follow: residues 194–214 (WIFY…GLFL), 233–253 (WGGS…LSWG), and 261–281 (GWQT…FFAY). Asparagine 299 carries N-linked (GlcNAc...) asparagine glycosylation. 6 helical membrane passes run 305-325 (LLVI…FLPV), 340-360 (VMLF…GITI), 368-388 (VWHF…TLLD), 401-421 (ILFG…ILAS), 433-453 (AWTF…AAVF), and 509-529 (KVVW…CFFV). Asparagine 553 carries N-linked (GlcNAc...) asparagine glycosylation.

It belongs to the major facilitator superfamily. TCR/Tet family.

The protein resides in the membrane. Functionally, efflux pump; part of the gene cluster that mediates the biosynthesis of the mycotoxin fusarin C. Within the cluster, FUS1, FUS2, FUS8 and FUS9 are sufficient for fusarin production. The other FUS cluster members are not essential for fusarin C biosynthesis. This is Efflux pump FUS6 from Gibberella moniliformis (strain M3125 / FGSC 7600) (Maize ear and stalk rot fungus).